The chain runs to 215 residues: Methylosome subunit pICln (215 aa).

Disordered regions lie at residues 88 to 120 and 160 to 215; these read GDPP…DEDD and HPDS…DADE. 3 stretches are compositionally biased toward acidic residues: residues 105–120, 167–190, and 203–215; these read AEVD…DEDD, DSED…EDDA, and LDDD…DADE.

Belongs to the pICln (TC 1.A.47) family. Component of the methylosome, a 20S complex containing at least CLNS1A/pICln, PRMT5/SKB1 and WDR77/MEP50; may mediate SNRPD1 and SNRPD3 methylation. Forms a 6S pICln-Sm complex composed of CLNS1A/pICln, SNRPD1, SNRPD2, SNRPE, SNRPF and SNRPG; ring-like structure where CLNS1A/pICln mimics additional Sm proteins and which is unable to assemble into the core snRNP.

It is found in the cytoplasm. The protein localises to the cytosol. It localises to the nucleus. The protein resides in the cytoskeleton. Functionally, involved in both the assembly of spliceosomal snRNPs and the methylation of Sm proteins. Chaperone that regulates the assembly of spliceosomal U1, U2, U4 and U5 small nuclear ribonucleoproteins (snRNPs), the building blocks of the spliceosome, and thereby plays an important role in the splicing of cellular pre-mRNAs. Most spliceosomal snRNPs contain a common set of Sm proteins SNRPB, SNRPD1, SNRPD2, SNRPD3, SNRPE, SNRPF and SNRPG that assemble in a heptameric protein ring on the Sm site of the small nuclear RNA to form the core snRNP (Sm core). In the cytosol, the Sm proteins SNRPD1, SNRPD2, SNRPE, SNRPF and SNRPG are trapped in an inactive 6S pICln-Sm complex by the chaperone CLNS1A that controls the assembly of the core snRNP. Dissociation by the SMN complex of CLNS1A from the trapped Sm proteins and their transfer to an SMN-Sm complex triggers the assembly of core snRNPs and their transport to the nucleus. The sequence is that of Methylosome subunit pICln (icln) from Drosophila melanogaster (Fruit fly).